A 287-amino-acid chain; its full sequence is MKNTSKFQNVVIVTIVGWLVLFVFLPNLMIIGTSFLTRDDASFVKMVFTLDNYARLLDPLYFEVLLHSLNMALIATLSCLVLGYPFAWFLAKLPEKIRPLLLFLLIVPFWTNSLIRIYGLKIFLSTKGYLNEFLLWLGVIDTPIRIMFTPSAVIIGLVYILLPFMVMPLYSSIEKLDKPLLEAARDLGASKMQTFIRIIIPLTMPGIVAGCLLVMLPAMGLFYVSDLMGGAKNLLIGNVIKVQFLNIRDWPFGAATSITLTIVMGLMLLIYWRASRLLNKKVSDISD.

Topologically, residues 1–10 (MKNTSKFQNV) are cytoplasmic. The chain crosses the membrane as a helical span at residues 11 to 31 (VIVTIVGWLVLFVFLPNLMII). At 32-70 (GTSFLTRDDASFVKMVFTLDNYARLLDPLYFEVLLHSLN) the chain is on the periplasmic side. Positions 65–271 (LLHSLNMALI…IVMGLMLLIY (207 aa)) constitute an ABC transmembrane type-1 domain. The chain crosses the membrane as a helical span at residues 71–91 (MALIATLSCLVLGYPFAWFLA). The Cytoplasmic segment spans residues 92–99 (KLPEKIRP). Residues 100–120 (LLLFLLIVPFWTNSLIRIYGL) form a helical membrane-spanning segment. Residues 121–145 (KIFLSTKGYLNEFLLWLGVIDTPIR) are Periplasmic-facing. The helical transmembrane segment at 146–166 (IMFTPSAVIIGLVYILLPFMV) threads the bilayer. Residues 167–197 (MPLYSSIEKLDKPLLEAARDLGASKMQTFIR) lie on the Cytoplasmic side of the membrane. Residues 198-218 (IIIPLTMPGIVAGCLLVMLPA) form a helical membrane-spanning segment. Topologically, residues 219-251 (MGLFYVSDLMGGAKNLLIGNVIKVQFLNIRDWP) are periplasmic. A helical membrane pass occupies residues 252–272 (FGAATSITLTIVMGLMLLIYW). Over 273-287 (RASRLLNKKVSDISD) the chain is Cytoplasmic.

This sequence belongs to the binding-protein-dependent transport system permease family. CysTW subfamily.

Its subcellular location is the cell inner membrane. Required for the activity of the bacterial periplasmic transport system of putrescine and spermidine. The chain is Spermidine/putrescine transport system permease protein PotB (potB) from Salmonella typhi.